We begin with the raw amino-acid sequence, 545 residues long: Leucine-rich repeat LGI family member 2 (545 aa).

An N-terminal signal peptide occupies residues 1 to 28 (MALRRGGCGALGLLLLLLGAACLIPRSA). The 37-residue stretch at 29 to 65 (QVRRLARCPATCSCTKESIICVGSSWVPRIVPGDISS) folds into the LRRNT domain. A glycan (N-linked (GlcNAc...) asparagine) is linked at asparagine 70. 3 LRR repeats span residues 86–107 (SLQLLLLNSNSFTIIRDDAFAG), 110–131 (HLEYLFIEGNKIETISRNAFRG), and 134–155 (DLTHLSLANNHIKALPRDVFSD). The 51-residue stretch at 167 to 217 (NKFECDCKAKWLYLWLKMTNSTVSDVLCIGPPEYQEKKLNDVTSFDYECTT) folds into the LRRCT domain. Residue asparagine 186 is glycosylated (N-linked (GlcNAc...) asparagine). EAR repeat units lie at residues 219 to 261 (DFVV…EWDH), 265 to 307 (NFRS…KYDE), 311 to 358 (KFVK…KWNS), 360 to 403 (GFYS…QWNK), 407 to 450 (KFVP…RWNS), 452 to 494 (QFVE…QWDK), and 498 to 540 (LFKK…EHII). An N-linked (GlcNAc...) asparagine glycan is attached at asparagine 271. Residue asparagine 402 is glycosylated (N-linked (GlcNAc...) asparagine).

Brain, heart and placenta.

Its subcellular location is the secreted. Its function is as follows. Required for the development of soma-targeting inhibitory GABAergic synapses made by parvalbumin-positive basket cells. The protein is Leucine-rich repeat LGI family member 2 (LGI2) of Homo sapiens (Human).